The sequence spans 177 residues: Inner membrane protein p22 (177 aa).

Residues Met-1–Thr-7 are Intravirion-facing. A helical membrane pass occupies residues Ile-8–Tyr-28. The Virion surface portion of the chain corresponds to Tyr-29–Ala-177.

Belongs to the asfivirus inner membrane protein p22 family.

The protein localises to the virion membrane. Its subcellular location is the host cell membrane. The chain is Inner membrane protein p22 from African swine fever virus (isolate Warthog/Namibia/Wart80/1980) (ASFV).